The following is a 577-amino-acid chain: Sulfite reductase [NADPH] hemoprotein beta-component (577 aa).

Residues cysteine 436, cysteine 442, cysteine 481, and cysteine 485 each contribute to the [4Fe-4S] cluster site. Cysteine 485 lines the siroheme pocket.

Belongs to the nitrite and sulfite reductase 4Fe-4S domain family. Alpha(8)-beta(8). The alpha component is a flavoprotein, the beta component is a hemoprotein. It depends on siroheme as a cofactor. [4Fe-4S] cluster serves as cofactor.

The enzyme catalyses hydrogen sulfide + 3 NADP(+) + 3 H2O = sulfite + 3 NADPH + 4 H(+). The protein operates within sulfur metabolism; hydrogen sulfide biosynthesis; hydrogen sulfide from sulfite (NADPH route): step 1/1. Component of the sulfite reductase complex that catalyzes the 6-electron reduction of sulfite to sulfide. This is one of several activities required for the biosynthesis of L-cysteine from sulfate. The sequence is that of Sulfite reductase [NADPH] hemoprotein beta-component from Shewanella woodyi (strain ATCC 51908 / MS32).